Consider the following 238-residue polypeptide: Uridylate kinase (238 aa).

Lys12–Gly15 provides a ligand contact to ATP. Residue Gly54 participates in UMP binding. ATP contacts are provided by Gly55 and Arg59. UMP contacts are provided by residues Asp74 and Thr135–Thr142. Residues Thr162, Tyr168, and Asp171 each coordinate ATP.

Belongs to the UMP kinase family. As to quaternary structure, homohexamer.

Its subcellular location is the cytoplasm. It carries out the reaction UMP + ATP = UDP + ADP. It functions in the pathway pyrimidine metabolism; CTP biosynthesis via de novo pathway; UDP from UMP (UMPK route): step 1/1. With respect to regulation, inhibited by UTP. Its function is as follows. Catalyzes the reversible phosphorylation of UMP to UDP. In Lawsonia intracellularis (strain PHE/MN1-00), this protein is Uridylate kinase.